The sequence spans 269 residues: uncharacterized protein (269 aa).

A DNA-binding region (ompR/PhoB-type) is located at residues 3–105 (WIINDNIEFW…VPRRGFKIHN (103 aa)).

The protein to V.cholerae cholera toxin transcriptional activator (ToxR).

This is an uncharacterized protein from Escherichia coli (strain K12).